A 363-amino-acid chain; its full sequence is Ribosome-binding ATPase YchF (363 aa).

The 254-residue stretch at 3-256 (FKCGIVGLPN…LDDEEKVEFL (254 aa)) folds into the OBG-type G domain. 12-17 (NVGKST) lines the ATP pocket. The Mg(2+) site is built by Ser-16 and Thr-36. Residues 278–361 (NLQTYFTAGV…QDGDVMHFRF (84 aa)) form the TGS domain.

The cofactor is Mg(2+).

In terms of biological role, ATPase that binds to both the 70S ribosome and the 50S ribosomal subunit in a nucleotide-independent manner. Does not hydrolyze GTP. The polypeptide is Ribosome-binding ATPase YchF (Haemophilus influenzae (strain ATCC 51907 / DSM 11121 / KW20 / Rd)).